The primary structure comprises 211 residues: Uracil phosphoribosyltransferase (211 aa).

5-phospho-alpha-D-ribose 1-diphosphate contacts are provided by residues R81, R106, and 133-141; that span reads DPMLATGNS. Residues I196 and 201 to 203 contribute to the uracil site; that span reads GDA. Position 202 (D202) interacts with 5-phospho-alpha-D-ribose 1-diphosphate.

This sequence belongs to the UPRTase family. It depends on Mg(2+) as a cofactor.

It catalyses the reaction UMP + diphosphate = 5-phospho-alpha-D-ribose 1-diphosphate + uracil. It functions in the pathway pyrimidine metabolism; UMP biosynthesis via salvage pathway; UMP from uracil: step 1/1. With respect to regulation, allosterically activated by GTP. Functionally, catalyzes the conversion of uracil and 5-phospho-alpha-D-ribose 1-diphosphate (PRPP) to UMP and diphosphate. The polypeptide is Uracil phosphoribosyltransferase (Paracoccus denitrificans (strain Pd 1222)).